A 189-amino-acid polypeptide reads, in one-letter code: Hypoxanthine/guanine phosphoribosyltransferase (189 aa).

This sequence belongs to the purine/pyrimidine phosphoribosyltransferase family. Archaeal HPRT subfamily. As to quaternary structure, homodimer.

The protein resides in the cytoplasm. It carries out the reaction IMP + diphosphate = hypoxanthine + 5-phospho-alpha-D-ribose 1-diphosphate. The enzyme catalyses GMP + diphosphate = guanine + 5-phospho-alpha-D-ribose 1-diphosphate. Its pathway is purine metabolism; IMP biosynthesis via salvage pathway; IMP from hypoxanthine: step 1/1. In terms of biological role, catalyzes a salvage reaction resulting in the formation of IMP that is energically less costly than de novo synthesis. This chain is Hypoxanthine/guanine phosphoribosyltransferase (hpt), found in Methanosarcina acetivorans (strain ATCC 35395 / DSM 2834 / JCM 12185 / C2A).